The sequence spans 316 residues: Transaldolase (316 aa).

K132 acts as the Schiff-base intermediate with substrate in catalysis.

This sequence belongs to the transaldolase family. Type 1 subfamily.

It localises to the cytoplasm. The enzyme catalyses D-sedoheptulose 7-phosphate + D-glyceraldehyde 3-phosphate = D-erythrose 4-phosphate + beta-D-fructose 6-phosphate. It participates in carbohydrate degradation; pentose phosphate pathway; D-glyceraldehyde 3-phosphate and beta-D-fructose 6-phosphate from D-ribose 5-phosphate and D-xylulose 5-phosphate (non-oxidative stage): step 2/3. Functionally, transaldolase is important for the balance of metabolites in the pentose-phosphate pathway. The protein is Transaldolase of Methylomonas aminofaciens.